The sequence spans 147 residues: MVHLTDAEKAAVNGLWGKVNPDDVGGEALGRLLVVYPWTQRYFDSFGDLSSASAIMGNPKVKAHGKKVINAFNDGLKHLDNLKGTFAHLSELHCDKLHVDPENFRLLGNMIVIVLGHHLGKEFTPCAQAAFQKVVAGVASALAHKYH.

V2 carries the post-translational modification N-acetylvaline. The Globin domain maps to 3–147 (HLTDAEKAAV…VASALAHKYH (145 aa)). N6-succinyllysine is present on K18. 3 positions are modified to phosphoserine: S45, S51, and S53. At K60 the chain carries N6-succinyllysine. Residues H64 and H93 each contribute to the heme b site. Position 105 is an asymmetric dimethylarginine (R105). T124 carries the phosphothreonine modification.

This sequence belongs to the globin family. As to quaternary structure, heterotetramer of two alpha chains and two beta chains. In terms of tissue distribution, red blood cells.

In terms of biological role, involved in oxygen transport from the lung to the various peripheral tissues. The polypeptide is Hemoglobin subunit beta-1 (Hbb) (Rattus norvegicus (Rat)).